The chain runs to 333 residues: Ferredoxin--NADP reductase (333 aa).

The FAD site is built by Asp-32, Gln-40, Tyr-45, Ala-85, Phe-119, Asp-285, and Thr-326.

The protein belongs to the ferredoxin--NADP reductase type 2 family. In terms of assembly, homodimer. It depends on FAD as a cofactor.

It carries out the reaction 2 reduced [2Fe-2S]-[ferredoxin] + NADP(+) + H(+) = 2 oxidized [2Fe-2S]-[ferredoxin] + NADPH. In Neorickettsia sennetsu (strain ATCC VR-367 / Miyayama) (Ehrlichia sennetsu), this protein is Ferredoxin--NADP reductase.